A 997-amino-acid chain; its full sequence is P3N-PIPO polyprotein (997 aa).

The Peptidase S30 domain maps to 173-313 (IVCVDDVNNL…VLFYSDVEHY (141 aa)). Active-site for P1 proteinase activity residues include Glu-235 and Ser-267. Residues 365–368 (KLSC) carry the Involved in interaction with stylet and aphid transmission motif. The short motif at 621-623 (PTK) is the Involved in virions binding and aphid transmission element. In terms of domain architecture, Peptidase C6 spans 647–769 (MYIAKEGYCY…QSEMKHYRVG (123 aa)). Active-site for helper component proteinase activity residues include Cys-655 and His-728.

Belongs to the potyviridae P3N-PIPO polyprotein family. As to quaternary structure, interacts (via PIPO domain) with host PCaP1 protein; this interaction may help to anchor the movement complex to the plasma membrane from which the complex could move to the plasmodesmata. Potyviral RNA is expressed as two polyproteins which undergo post-translational proteolytic processing. Genome polyprotein is processed by NIa-pro, P1 and HC-pro proteinases resulting in the production of at least ten individual proteins. P3N-PIPO is cleaved by P1 and HC-pro proteinases resulting in the production of three individual proteins. The P1 proteinase and the HC-pro cleave only their respective C-termini autocatalytically.

It localises to the host cell junction. It is found in the host plasmodesma. The catalysed reaction is Hydrolyzes a Gly-|-Gly bond at its own C-terminus, commonly in the sequence -Tyr-Xaa-Val-Gly-|-Gly, in the processing of the potyviral polyprotein.. In terms of biological role, required for aphid transmission and also has proteolytic activity. Only cleaves a Gly-Gly dipeptide at its own C-terminus. Interacts with virions and aphid stylets. Acts as a suppressor of RNA-mediated gene silencing, also known as post-transcriptional gene silencing (PTGS), a mechanism of plant viral defense that limits the accumulation of viral RNAs. May have RNA-binding activity. Allows efficient cell to cell propagation, by bypassing the host cell wall barrier. Transports viral genome to neighboring plant cells directly through plasmosdesmata, without any budding. This chain is P3N-PIPO polyprotein, found in Citrullus lanatus (Watermelon).